Consider the following 288-residue polypeptide: Pantothenate synthetase (288 aa).

An ATP-binding site is contributed by 30-37 (MGNLHAGH). The active-site Proton donor is His-37. Residue Gln-61 participates in (R)-pantoate binding. Gln-61 is a binding site for beta-alanine. 149–152 (GLKD) contributes to the ATP binding site. Gln-155 contributes to the (R)-pantoate binding site. ATP is bound by residues Ile-178 and 186-189 (LSSR).

Belongs to the pantothenate synthetase family. As to quaternary structure, homodimer.

It is found in the cytoplasm. It catalyses the reaction (R)-pantoate + beta-alanine + ATP = (R)-pantothenate + AMP + diphosphate + H(+). It functions in the pathway cofactor biosynthesis; (R)-pantothenate biosynthesis; (R)-pantothenate from (R)-pantoate and beta-alanine: step 1/1. Functionally, catalyzes the condensation of pantoate with beta-alanine in an ATP-dependent reaction via a pantoyl-adenylate intermediate. This is Pantothenate synthetase from Colwellia psychrerythraea (strain 34H / ATCC BAA-681) (Vibrio psychroerythus).